Reading from the N-terminus, the 166-residue chain is Small ribosomal subunit protein uS5 (166 aa).

An S5 DRBM domain is found at 12-75; the sequence is YIEKLVQVNR…EAARRNMIQV (64 aa).

The protein belongs to the universal ribosomal protein uS5 family. In terms of assembly, part of the 30S ribosomal subunit. Contacts proteins S4 and S8.

With S4 and S12 plays an important role in translational accuracy. Its function is as follows. Located at the back of the 30S subunit body where it stabilizes the conformation of the head with respect to the body. This Pseudomonas fluorescens (strain Pf0-1) protein is Small ribosomal subunit protein uS5.